A 312-amino-acid chain; its full sequence is Regulation of nuclear pre-mRNA domain-containing protein 1A (312 aa).

S2 carries the post-translational modification N-acetylserine. The 132-residue stretch at 2–133 (SAFSEAALEK…QLKQALYGDK (132 aa)) folds into the CID domain. A phosphoserine mark is found at S153, S156, and S285. The stretch at 244 to 286 (LADFLRCQKEALAEKEHKLEEYKRKLARVSLVRKELRSRIQSL) forms a coiled coil.

The protein belongs to the UPF0400 (RTT103) family. As to quaternary structure, may form a heterodimer with RPRD1B. Associates with the RNA polymerase II subunit POLR2A (via CTD phosphorylated at 'Ser-2' and 'Ser-7' of the heptad repeats).

It localises to the nucleus. Interacts with phosphorylated C-terminal heptapeptide repeat domain (CTD) of the largest RNA polymerase II subunit POLR2A, and participates in dephosphorylation of the CTD by RPAP2. May act as a negative regulator of cyclin-D1 (CCND1) and cyclin-E (CCNE1) in the cell cycle. The protein is Regulation of nuclear pre-mRNA domain-containing protein 1A (RPRD1A) of Pongo abelii (Sumatran orangutan).